Here is a 57-residue protein sequence, read N- to C-terminus: Large ribosomal subunit protein eL37 (57 aa).

Positions 20, 23, 35, and 38 each coordinate Zn(2+). The segment at 20–38 (CRRCGEKSYHKQKKVCASC) adopts a C4-type zinc-finger fold.

This sequence belongs to the eukaryotic ribosomal protein eL37 family. It depends on Zn(2+) as a cofactor.

Functionally, binds to the 23S rRNA. In Natronomonas pharaonis (strain ATCC 35678 / DSM 2160 / CIP 103997 / JCM 8858 / NBRC 14720 / NCIMB 2260 / Gabara) (Halobacterium pharaonis), this protein is Large ribosomal subunit protein eL37.